Reading from the N-terminus, the 315-residue chain is Cross-pathway control WD-repeat protein 2 (315 aa).

WD repeat units lie at residues 14–54 (GHKG…DSYG), 62–101 (GHNH…TTRR), 104–144 (GHTS…YDIK), 147–188 (CHTE…LKTN), 191–230 (GHTG…HLYS), 232–270 (EAGD…IVDE), and 282–315 (GRQP…TVTS).

Belongs to the WD repeat G protein beta family. Ribosomal protein RACK1 subfamily.

In terms of biological role, component of the ribosome, a large ribonucleoprotein complex responsible for the synthesis of proteins in the cell. The small ribosomal subunit (SSU) binds messenger RNAs (mRNAs) and translates the encoded message by selecting cognate aminoacyl-transfer RNA (tRNA) molecules. The large subunit (LSU) contains the ribosomal catalytic site termed the peptidyl transferase center (PTC), which catalyzes the formation of peptide bonds, thereby polymerizing the amino acids delivered by tRNAs into a polypeptide chain. The nascent polypeptides leave the ribosome through a tunnel in the LSU and interact with protein factors that function in enzymatic processing, targeting, and the membrane insertion of nascent chains at the exit of the ribosomal tunnel. Plays in important role in the regulation of vegetative growth and fruiting body development. Especially, positively regulates the expression of genes involved in fruiting body development such as FVFD30 and FVFD16, as well as genes encoding for lectins and hydrophobins. Also regulates the expression of genes involved in cAMP signaling pathway. This chain is Cross-pathway control WD-repeat protein 2, found in Flammulina velutipes (Agaricus velutipes).